Consider the following 151-residue polypeptide: Transcriptional repressor NrdR (151 aa).

The segment at 3–34 is a zinc-finger region; sequence CPYCGYGESKVVDSRATDDKMAIRRRRECLKC. One can recognise an ATP-cone domain in the interval 49 to 139; it reads LLVIKKNMSR…VYRQFKDINT (91 aa).

This sequence belongs to the NrdR family. Zn(2+) is required as a cofactor.

In terms of biological role, negatively regulates transcription of bacterial ribonucleotide reductase nrd genes and operons by binding to NrdR-boxes. The chain is Transcriptional repressor NrdR from Clostridium kluyveri (strain NBRC 12016).